We begin with the raw amino-acid sequence, 237 residues long: Ribonuclease PH (237 aa).

Phosphate-binding positions include R86 and 124-126 (GTR).

This sequence belongs to the RNase PH family. In terms of assembly, homohexameric ring arranged as a trimer of dimers.

It carries out the reaction tRNA(n+1) + phosphate = tRNA(n) + a ribonucleoside 5'-diphosphate. Its function is as follows. Phosphorolytic 3'-5' exoribonuclease that plays an important role in tRNA 3'-end maturation. Removes nucleotide residues following the 3'-CCA terminus of tRNAs; can also add nucleotides to the ends of RNA molecules by using nucleoside diphosphates as substrates, but this may not be physiologically important. Probably plays a role in initiation of 16S rRNA degradation (leading to ribosome degradation) during starvation. This is Ribonuclease PH from Shewanella denitrificans (strain OS217 / ATCC BAA-1090 / DSM 15013).